A 144-amino-acid polypeptide reads, in one-letter code: Cytochrome c oxidase subunit 4 isoform 1, mitochondrial (144 aa).

Over 1–73 (SVVKSEDFSL…SFAEMNRGSN (73 aa)) the chain is Mitochondrial matrix. Lys4 carries the post-translational modification N6-acetyllysine; alternate. The residue at position 4 (Lys4) is an N6-succinyllysine; alternate. Lys28 carries the N6-acetyllysine modification. Phosphoserine is present on residues Ser31 and Ser33. Lys35 is modified (N6-acetyllysine; alternate). Lys35 carries the post-translational modification N6-succinyllysine; alternate. An N6-acetyllysine modification is found at Lys42. Residues 74 to 99 (EWKTVVGGAMFFIGFTALVIMWQKHY) form a helical membrane-spanning segment. Residues 100–144 (VYGPLPQSFDKEWVAKQTKRMLDMKVNPIQGLASKWDYEKNEWKK) are Mitochondrial intermembrane-facing.

Belongs to the cytochrome c oxidase IV family. Component of the cytochrome c oxidase (complex IV, CIV), a multisubunit enzyme composed of 14 subunits. The complex is composed of a catalytic core of 3 subunits MT-CO1, MT-CO2 and MT-CO3, encoded in the mitochondrial DNA, and 11 supernumerary subunits COX4I, COX5A, COX5B, COX6A, COX6B, COX6C, COX7A, COX7B, COX7C, COX8 and NDUFA4, which are encoded in the nuclear genome. The complex exists as a monomer or a dimer and forms supercomplexes (SCs) in the inner mitochondrial membrane with NADH-ubiquinone oxidoreductase (complex I, CI) and ubiquinol-cytochrome c oxidoreductase (cytochrome b-c1 complex, complex III, CIII), resulting in different assemblies (supercomplex SCI(1)III(2)IV(1) and megacomplex MCI(2)III(2)IV(2)). Interacts with PHB2; the interaction decreases in absence of SPHK2. Interacts with AFG1L. Interacts with ABCB7; this interaction allows the regulation of cellular iron homeostasis and cellular reactive oxygen species (ROS) levels in cardiomyocytes. Interacts with FLVCR2; this interaction occurs in the absence of heme and is disrupted upon heme binding. Interacts with IRGC.

Its subcellular location is the mitochondrion inner membrane. Its pathway is energy metabolism; oxidative phosphorylation. Its function is as follows. Component of the cytochrome c oxidase, the last enzyme in the mitochondrial electron transport chain which drives oxidative phosphorylation. The respiratory chain contains 3 multisubunit complexes succinate dehydrogenase (complex II, CII), ubiquinol-cytochrome c oxidoreductase (cytochrome b-c1 complex, complex III, CIII) and cytochrome c oxidase (complex IV, CIV), that cooperate to transfer electrons derived from NADH and succinate to molecular oxygen, creating an electrochemical gradient over the inner membrane that drives transmembrane transport and the ATP synthase. Cytochrome c oxidase is the component of the respiratory chain that catalyzes the reduction of oxygen to water. Electrons originating from reduced cytochrome c in the intermembrane space (IMS) are transferred via the dinuclear copper A center (CU(A)) of subunit 2 and heme A of subunit 1 to the active site in subunit 1, a binuclear center (BNC) formed by heme A3 and copper B (CU(B)). The BNC reduces molecular oxygen to 2 water molecules using 4 electrons from cytochrome c in the IMS and 4 protons from the mitochondrial matrix. The sequence is that of Cytochrome c oxidase subunit 4 isoform 1, mitochondrial (COX4I1) from Gorilla gorilla gorilla (Western lowland gorilla).